Consider the following 155-residue polypeptide: Small ribosomal subunit protein uS8m (155 aa).

Belongs to the universal ribosomal protein uS8 family. As to quaternary structure, component of the mitochondrial small ribosomal subunit (mt-SSU). Mature yeast 74S mitochondrial ribosomes consist of a small (37S) and a large (54S) subunit. The 37S small subunit contains a 15S ribosomal RNA (15S mt-rRNA) and 34 different proteins. The 54S large subunit contains a 21S rRNA (21S mt-rRNA) and 46 different proteins.

Its subcellular location is the mitochondrion. Functionally, component of the mitochondrial ribosome (mitoribosome), a dedicated translation machinery responsible for the synthesis of mitochondrial genome-encoded proteins, including at least some of the essential transmembrane subunits of the mitochondrial respiratory chain. The mitoribosomes are attached to the mitochondrial inner membrane and translation products are cotranslationally integrated into the membrane. The polypeptide is Small ribosomal subunit protein uS8m (MRPS8) (Saccharomyces cerevisiae (strain ATCC 204508 / S288c) (Baker's yeast)).